We begin with the raw amino-acid sequence, 360 residues long: S-adenosylmethionine:tRNA ribosyltransferase-isomerase (360 aa).

The protein belongs to the QueA family. In terms of assembly, monomer.

The protein localises to the cytoplasm. The catalysed reaction is 7-aminomethyl-7-carbaguanosine(34) in tRNA + S-adenosyl-L-methionine = epoxyqueuosine(34) in tRNA + adenine + L-methionine + 2 H(+). Its pathway is tRNA modification; tRNA-queuosine biosynthesis. Its function is as follows. Transfers and isomerizes the ribose moiety from AdoMet to the 7-aminomethyl group of 7-deazaguanine (preQ1-tRNA) to give epoxyqueuosine (oQ-tRNA). This chain is S-adenosylmethionine:tRNA ribosyltransferase-isomerase, found in Burkholderia pseudomallei (strain K96243).